Here is a 320-residue protein sequence, read N- to C-terminus: Citrate synthase (320 aa).

Active-site residues include His249 and Asp307.

It belongs to the citrate synthase family.

The catalysed reaction is oxaloacetate + acetyl-CoA + H2O = citrate + CoA + H(+). The protein operates within carbohydrate metabolism; tricarboxylic acid cycle; isocitrate from oxaloacetate: step 1/2. In Bartonella doshiae, this protein is Citrate synthase (gltA).